Reading from the N-terminus, the 2313-residue chain is Histone-lysine N-methyltransferase Set2 (2313 aa).

Disordered regions lie at residues 1–115 (MEES…ASTS), 179–442 (AVGG…EETF), 550–858 (EPPL…LKAK), 883–1106 (RLDE…KKAL), 1118–1150 (ETESSESTSSGSKMSRWDVQTSPELEAANPFGD), and 1163–1251 (KRDK…SQGR). Positions 17–29 (GRGRGRPPKVALS) form a DNA-binding region, a.T hook 1. The segment covering 73 to 82 (IKFDVRDLLN) has biased composition (basic and acidic residues). The span at 101–115 (STGHSQSGTTAASTS) shows a compositional bias: low complexity. The a.T hook 2 DNA-binding region spans 197–209 (PRKRGRPRKSQLA). Positions 221–241 (SCSDSDTNSTSTTTSNMSSDS) are enriched in low complexity. Over residues 252–265 (PKSKLRVSLKRLKL) the composition is skewed to basic residues. Low complexity predominate over residues 266–288 (GGRLESSDSGNSPSSSSPEVEPP). The span at 330–345 (ESPKGEEEQEEGRPVE) shows a compositional bias: basic and acidic residues. 3 stretches are compositionally biased toward acidic residues: residues 347–356 (EPQDLIDIDM), 365–375 (PDPEEDLDEIM), and 388–398 (ADDEAEEEEDA). A Phosphothreonine modification is found at T404. The segment covering 412 to 433 (ADSCSSAPRRSRRSAPLSGSSR) has biased composition (low complexity). Basic and acidic residues predominate over residues 552–563 (PLKDESDPKQTE). Over residues 659 to 671 (EDYESNQEQVAED) the composition is skewed to acidic residues. Residues 676-685 (CNNQKGQKQT) show a composition bias toward polar residues. Basic and acidic residues-rich tracts occupy residues 689 to 708 (EMKEPEKPVAETVSKKEKAM), 719 to 732 (VDKKVRAGEMEKKV), 740 to 749 (VPEKKMDSKK), and 758 to 782 (KQKESGKSAKEAILKKETEKEKSSA). S786 and S788 each carry phosphoserine. Composition is skewed to polar residues over residues 800–833 (AQWSPQLQTLPKSSTKPPQESAPSVISKTTSNQP), 918–928 (KSLSGKTSLRR), and 938–955 (LERNSSPSSDSAQANTSA). Positions 959–969 (KPSKVKKKINP) are enriched in basic residues. The span at 997–1010 (SSPVSTSSDSSSKR) shows a compositional bias: low complexity. Basic and acidic residues predominate over residues 1016-1039 (TTSDLDGGSKLDQRRYTICEDRQP). 2 stretches are compositionally biased toward low complexity: residues 1085 to 1097 (SRQNSLDSSSSAS) and 1118 to 1127 (ETESSESTSS). Over residues 1163-1183 (KRDKVDEDQRKEGQDEVKREA) the composition is skewed to basic and acidic residues. The segment covering 1199–1213 (TPATTPTPSPTQSNP) has biased composition (low complexity). The AWS domain occupies 1307–1360 (NAEMQCDCFLTGDEEAQGHLSCGAGCINRMLMIECGPLCSNGARCTNKRFQQHQ). C1312, C1314, C1328, C1332, C1341, C1345, and C1351 together coordinate Zn(2+). One can recognise an SET domain in the interval 1362–1479 (WPCRVFRTEK…PGEEITFDYQ (118 aa)). S-adenosyl-L-methionine contacts are provided by residues 1415 to 1417 (HYY) and 1440 to 1441 (NH). A Zn(2+)-binding site is contributed by C1443. The region spanning 1486–1502 (DAQRCYCEAANCRGWIG) is the Post-SET domain. Residue Q1488 coordinates S-adenosyl-L-methionine. C1490 provides a ligand contact to Zn(2+). Y1491 serves as a coordination point for S-adenosyl-L-methionine. Zn(2+) is bound by residues C1492 and C1497. Disordered stretches follow at residues 1501-1598 (IGGE…KPKV) and 1763-1860 (MKEH…RRTL). The span at 1505-1534 (PDSDEGEQLDEESDSDAEMDEEELEAEPEE) shows a compositional bias: acidic residues. Residues 1539–1551 (KSAKAKAKSKLKA) show a composition bias toward basic residues. Basic and acidic residues-rich tracts occupy residues 1564 to 1574 (QTKPKDREYKA), 1763 to 1774 (MKEHEREADRQQ), and 1784 to 1806 (EDQRERESSNDRFRQDRFRRDTT). The span at 1817 to 1832 (SGNNTICTITTQQKGS) shows a compositional bias: polar residues. Residues 1840–1860 (TRNDNRRRSDIGPPSEQRRTL) are compositionally biased toward basic and acidic residues. Residues 1963 to 1996 (DPLPPAWNWQVTSDGDIYYYNLRERISQWEPPSP) form the WW domain. 2 positions are modified to phosphoserine: S2130 and S2131. The segment at 2177-2218 (LGTVGKRKLPMPPSVTVKKHRQEQRSKKVKSSQSPLTATSAR) is disordered. Residues 2193–2206 (VKKHRQEQRSKKVK) show a composition bias toward basic residues. Positions 2207-2216 (SSQSPLTATS) are enriched in polar residues.

This sequence belongs to the class V-like SAM-binding methyltransferase superfamily. Histone-lysine methyltransferase family. SET2 subfamily. In terms of assembly, interacts with (phosphorylated) Polr2A.

The protein resides in the nucleus. The protein localises to the chromosome. It carries out the reaction L-lysyl(36)-[histone H3] + 3 S-adenosyl-L-methionine = N(6),N(6),N(6)-trimethyl-L-lysyl(36)-[histone H3] + 3 S-adenosyl-L-homocysteine + 3 H(+). Histone methyltransferase that specifically trimethylates 'Lys-36' of histone H3 (H3K36me3). Represents the main enzyme generating H3K36me3, a specific tag for epigenetic transcriptional activation. Involved in dosage compensation in males (X chromosome dosage compensation) by mediating formation of H3K36me3, a mark recognized by msl-3 component of the MSL complex. In addition to its role in dosage compensation in males, promotes germline stem cell differentiation in females: catalyzes formation of H3K36me3, promoting recruitment of msl-3 and subsequent recruitment of the ATAC complex, leading to transcription of genes, such as RpS19b. In Drosophila melanogaster (Fruit fly), this protein is Histone-lysine N-methyltransferase Set2.